The chain runs to 185 residues: Ribosome maturation factor RimP (185 aa).

Belongs to the RimP family.

Its subcellular location is the cytoplasm. Its function is as follows. Required for maturation of 30S ribosomal subunits. In Magnetococcus marinus (strain ATCC BAA-1437 / JCM 17883 / MC-1), this protein is Ribosome maturation factor RimP.